The chain runs to 548 residues: Chaperonin GroEL (548 aa).

Residues 30-33 (TLGP), Lys-51, 87-91 (DGTTT), Gly-415, 479-481 (NAA), and Asp-495 each bind ATP.

This sequence belongs to the chaperonin (HSP60) family. As to quaternary structure, forms a cylinder of 14 subunits composed of two heptameric rings stacked back-to-back. Interacts with the co-chaperonin GroES.

It localises to the cytoplasm. The enzyme catalyses ATP + H2O + a folded polypeptide = ADP + phosphate + an unfolded polypeptide.. Functionally, together with its co-chaperonin GroES, plays an essential role in assisting protein folding. The GroEL-GroES system forms a nano-cage that allows encapsulation of the non-native substrate proteins and provides a physical environment optimized to promote and accelerate protein folding. The chain is Chaperonin GroEL from Klebsiella aerogenes (strain ATCC 13048 / DSM 30053 / CCUG 1429 / JCM 1235 / KCTC 2190 / NBRC 13534 / NCIMB 10102 / NCTC 10006 / CDC 819-56) (Enterobacter aerogenes).